The primary structure comprises 473 residues: Response regulator protein FleR (473 aa).

The Response regulatory domain maps to 4 to 118 (KVLLVEDDRA…ALLDLVARHA (115 aa)). A 4-aspartylphosphate modification is found at D53. The region spanning 130–359 (PVALEPASRQ…LDNAIQRALI (230 aa)) is the Sigma-54 factor interaction domain. Residues 158–165 (GESGTGKE) and 221–230 (ADGGTILLDE) each bind ATP.

In terms of biological role, member of the two-component regulatory system FleS/FleR that regulates the expression of multiple genes involved in flagellar synthesis, adhesion, swarming, motility and antibiotic resistance. May function as a transcriptional activator by direct binding to a cis-acting sequence upstream of the target genes. The sequence is that of Response regulator protein FleR from Pseudomonas aeruginosa (strain ATCC 15692 / DSM 22644 / CIP 104116 / JCM 14847 / LMG 12228 / 1C / PRS 101 / PAO1).